Here is a 583-residue protein sequence, read N- to C-terminus: MGIAKIPAVLWLLACAVLTFAVAISPAHGGRTRRHYDFFITETNYRRLCHEKSVLTVNGQFPGPTIYARKGDLVIVNVYNHGNKNITIHWHGVDQPRNPWSDGPEFITQCPIRPDGKFTYQVIMSEEEGTLWWHAHSDFDRATVLGAIVVHPKHGDTFPFKRPDKEIPIILGEWWKNDVNHLLEEMKRIGEDVKPSDANTINGQPGDMFPCSRDDTFKVAVEHGNTYLLQVINAGLTNDMFFAVSGHRLTVVGIDARYTKPLTVEYIMIAPGQTMDLLLEANRSLGSKSNSRYYMAARTFITLPVPIPFNNSTATAVVEYYTGDSGAGPPDFPAVLPSLDDVDAAMAFLRQLRSLGSKDHPVHVPTHVDEHMLIDLAINFLPCNATNATDTACKGPKGNTTRFAASLNNVSFVSPAIDVLHAYYYGSGRGVYEDDFPNNPAPVFVNLTGDNDRPGVTKHGAKVKVLEYGTVVEVVFQDTSFESHPMHLHGFAFYVVGLGSGKFDDRRDPATYNLLDPPYQSTVSVPKAGWAAIRFRADNPGVWFMHCHFDRHMVWGMNTVFIVKDGKTPQAQMLPRPPNMPKC.

A signal peptide spans 1–29; sequence MGIAKIPAVLWLLACAVLTFAVAISPAHG. Plastocyanin-like domains follow at residues 39–155 and 165–323; these read FITE…PKHG and KEIP…YYTG. Residue Asn-85 is glycosylated (N-linked (GlcNAc...) asparagine). Residues His-89, His-91, His-134, and His-136 each contribute to the Cu cation site. N-linked (GlcNAc...) asparagine glycans are attached at residues Asn-282, Asn-311, Asn-384, Asn-387, Asn-399, Asn-409, and Asn-446. The 132-residue stretch at 436–567 folds into the Plastocyanin-like 3 domain; sequence FPNNPAPVFV…NTVFIVKDGK (132 aa). The Cu cation site is built by His-484, His-487, His-489, His-546, Cys-547, His-548, His-552, and Met-557.

The protein belongs to the multicopper oxidase family. It depends on Cu cation as a cofactor.

It localises to the secreted. It is found in the extracellular space. The protein resides in the apoplast. It carries out the reaction 4 hydroquinone + O2 = 4 benzosemiquinone + 2 H2O. In terms of biological role, lignin degradation and detoxification of lignin-derived products. This is Laccase-21 (LAC21) from Oryza sativa subsp. japonica (Rice).